We begin with the raw amino-acid sequence, 638 residues long: Probable potassium transport system protein Kup (638 aa).

Helical transmembrane passes span 25–45 (LAIA…LYSL), 65–85 (VISL…LLFV), 114–134 (AGAL…DAVI), 152–172 (PHLS…LFWI), 184–204 (FGPI…YHIV), 226–246 (LLQA…AEAL), 262–282 (AYGL…ALLI), 291–311 (PFFL…STVA), 352–372 (IYVP…VVGF), 382–402 (YGIA…VVMV), 410–430 (LLVG…FGAN), and 434–454 (VAQG…LLMT).

It belongs to the HAK/KUP transporter (TC 2.A.72) family.

The protein localises to the cell inner membrane. The catalysed reaction is K(+)(in) + H(+)(in) = K(+)(out) + H(+)(out). Transport of potassium into the cell. Likely operates as a K(+):H(+) symporter. The protein is Probable potassium transport system protein Kup of Burkholderia cenocepacia (strain HI2424).